The following is an 80-amino-acid chain: MSNKGQLLQDPFLNTLRREHVPVSIYLVNGIKLQGQIESFDQYVVLLKNTVTQMVYKHAISTVVPARPVTIQQQDGEGGN.

The 60-residue stretch at 10-69 folds into the Sm domain; sequence DPFLNTLRREHVPVSIYLVNGIKLQGQIESFDQYVVLLKNTVTQMVYKHAISTVVPARPV.

The protein belongs to the Hfq family. As to quaternary structure, homohexamer.

Its function is as follows. RNA chaperone that binds small regulatory RNA (sRNAs) and mRNAs to facilitate mRNA translational regulation in response to envelope stress, environmental stress and changes in metabolite concentrations. Also binds with high specificity to tRNAs. The chain is RNA-binding protein Hfq from Azoarcus sp. (strain BH72).